Reading from the N-terminus, the 514-residue chain is ATP synthase subunit alpha (514 aa).

170-177 (GDRQIGKT) contributes to the ATP binding site.

Belongs to the ATPase alpha/beta chains family. F-type ATPases have 2 components, CF(1) - the catalytic core - and CF(0) - the membrane proton channel. CF(1) has five subunits: alpha(3), beta(3), gamma(1), delta(1), epsilon(1). CF(0) has three main subunits: a(1), b(2) and c(9-12). The alpha and beta chains form an alternating ring which encloses part of the gamma chain. CF(1) is attached to CF(0) by a central stalk formed by the gamma and epsilon chains, while a peripheral stalk is formed by the delta and b chains.

It is found in the cell inner membrane. The catalysed reaction is ATP + H2O + 4 H(+)(in) = ADP + phosphate + 5 H(+)(out). Functionally, produces ATP from ADP in the presence of a proton gradient across the membrane. The alpha chain is a regulatory subunit. In Pseudomonas putida (strain ATCC 47054 / DSM 6125 / CFBP 8728 / NCIMB 11950 / KT2440), this protein is ATP synthase subunit alpha.